The chain runs to 208 residues: Urease accessory protein UreE (208 aa).

The disordered stretch occupies residues 145 to 165 (EGGAYSAGGHGHTHAPAATPV).

It belongs to the UreE family.

The protein resides in the cytoplasm. Its function is as follows. Involved in urease metallocenter assembly. Binds nickel. Probably functions as a nickel donor during metallocenter assembly. The polypeptide is Urease accessory protein UreE (Polaromonas naphthalenivorans (strain CJ2)).